The primary structure comprises 197 residues: ATP synthase subunit delta (197 aa).

This sequence belongs to the ATPase delta chain family. F-type ATPases have 2 components, F(1) - the catalytic core - and F(0) - the membrane proton channel. F(1) has five subunits: alpha(3), beta(3), gamma(1), delta(1), epsilon(1). F(0) has three main subunits: a(1), b(2) and c(10-14). The alpha and beta chains form an alternating ring which encloses part of the gamma chain. F(1) is attached to F(0) by a central stalk formed by the gamma and epsilon chains, while a peripheral stalk is formed by the delta and b chains.

Its subcellular location is the cell inner membrane. In terms of biological role, f(1)F(0) ATP synthase produces ATP from ADP in the presence of a proton or sodium gradient. F-type ATPases consist of two structural domains, F(1) containing the extramembraneous catalytic core and F(0) containing the membrane proton channel, linked together by a central stalk and a peripheral stalk. During catalysis, ATP synthesis in the catalytic domain of F(1) is coupled via a rotary mechanism of the central stalk subunits to proton translocation. Its function is as follows. This protein is part of the stalk that links CF(0) to CF(1). It either transmits conformational changes from CF(0) to CF(1) or is implicated in proton conduction. This Bartonella henselae (strain ATCC 49882 / DSM 28221 / CCUG 30454 / Houston 1) (Rochalimaea henselae) protein is ATP synthase subunit delta.